Reading from the N-terminus, the 150-residue chain is Ribosomal RNA large subunit methyltransferase H (150 aa).

S-adenosyl-L-methionine-binding positions include alanine 100 and 118-123 (LSEMTF).

Belongs to the RNA methyltransferase RlmH family. Homodimer.

It localises to the cytoplasm. The enzyme catalyses pseudouridine(1915) in 23S rRNA + S-adenosyl-L-methionine = N(3)-methylpseudouridine(1915) in 23S rRNA + S-adenosyl-L-homocysteine + H(+). Its function is as follows. Specifically methylates the pseudouridine at position 1915 (m3Psi1915) in 23S rRNA. This is Ribosomal RNA large subunit methyltransferase H from Helicobacter pylori (strain Shi470).